The following is a 200-amino-acid chain: Probable GTP-binding protein EngB (200 aa).

In terms of domain architecture, EngB-type G spans 22–199 (NVAEVAFLGR…QDKITGYLFG (178 aa)). GTP-binding positions include 30–37 (GRSNVGKS), 57–61 (GKTQL), 85–88 (DLPG), 155–158 (TKID), and 177–180 (FLSN). Mg(2+) contacts are provided by Ser-37 and Thr-59.

It belongs to the TRAFAC class TrmE-Era-EngA-EngB-Septin-like GTPase superfamily. EngB GTPase family. Mg(2+) is required as a cofactor.

In terms of biological role, necessary for normal cell division and for the maintenance of normal septation. The polypeptide is Probable GTP-binding protein EngB (Aliarcobacter butzleri (strain RM4018) (Arcobacter butzleri)).